We begin with the raw amino-acid sequence, 136 residues long: Large ribosomal subunit protein uL16 (136 aa).

Belongs to the universal ribosomal protein uL16 family. Part of the 50S ribosomal subunit.

In terms of biological role, binds 23S rRNA and is also seen to make contacts with the A and possibly P site tRNAs. The protein is Large ribosomal subunit protein uL16 of Shewanella woodyi (strain ATCC 51908 / MS32).